The following is a 276-amino-acid chain: Digeranylgeranylglyceryl phosphate synthase (276 aa).

5 consecutive transmembrane segments (helical) span residues 14–34 (VNTLAAGALTFIGAFVAGGAV), 90–110 (VVLFVGAAALAATLPVLAVCI), 144–164 (FVFGAAAVGSPLAGGVLAALA), 200–220 (ALAVSAVFVVGAAAASPVPYL), and 221–241 (VGVFGWWYLVAVCPGVVVMVV).

This sequence belongs to the UbiA prenyltransferase family. DGGGP synthase subfamily. Mg(2+) is required as a cofactor.

It is found in the cell membrane. The catalysed reaction is sn-3-O-(geranylgeranyl)glycerol 1-phosphate + (2E,6E,10E)-geranylgeranyl diphosphate = 2,3-bis-O-(geranylgeranyl)-sn-glycerol 1-phosphate + diphosphate. Its pathway is membrane lipid metabolism; glycerophospholipid metabolism. Functionally, prenyltransferase that catalyzes the transfer of the geranylgeranyl moiety of geranylgeranyl diphosphate (GGPP) to the C2 hydroxyl of (S)-3-O-geranylgeranylglyceryl phosphate (GGGP). This reaction is the second ether-bond-formation step in the biosynthesis of archaeal membrane lipids. In Halobacterium salinarum (strain ATCC 29341 / DSM 671 / R1), this protein is Digeranylgeranylglyceryl phosphate synthase.